Reading from the N-terminus, the 101-residue chain is Protein translation factor SUI1 homolog (101 aa).

Belongs to the SUI1 family.

This chain is Protein translation factor SUI1 homolog, found in Aeropyrum pernix (strain ATCC 700893 / DSM 11879 / JCM 9820 / NBRC 100138 / K1).